Consider the following 96-residue polypeptide: Pollen allergen Dac g 3 (96 aa).

In terms of domain architecture, Expansin-like CBD spans 14 to 94; sequence KKLVLDIKYT…AFKIGTTYTP (81 aa).

Belongs to the expansin family. Expansin B subfamily.

It localises to the secreted. This is Pollen allergen Dac g 3 from Dactylis glomerata (Orchard grass).